The following is a 190-amino-acid chain: Elongation factor P-like protein (190 aa).

Belongs to the elongation factor P family.

This is Elongation factor P-like protein from Shigella dysenteriae serotype 1 (strain Sd197).